The chain runs to 2216 residues: RNA-directed RNA polymerase L (2216 aa).

An endonuclease region spans residues 26–289; the sequence is KTSFLSQVNL…ETRTAMLDER (264 aa). Positions 51, 88, and 101 each coordinate Mn(2+). Residue Lys114 is part of the active site. The 198-residue stretch at 1167–1364 folds into the RdRp catalytic domain; sequence LDMKCVVRLS…YLSSKFNKFV (198 aa). Asp1323 is a binding site for Mg(2+).

This sequence belongs to the Bunyavirales RNA polymerase family. As to quaternary structure, homomultimer; the oligomeric structure is essential for the polymerase activity. Interacts with nucleoprotein N. Interacts with protein Z; this interaction inhibits viral transcription and replication, Z partially blocks the product exit tunnel for the releasing nascent RNA product. Mn(2+) serves as cofactor. Mg(2+) is required as a cofactor.

It is found in the virion. Its subcellular location is the host cytoplasm. It catalyses the reaction RNA(n) + a ribonucleoside 5'-triphosphate = RNA(n+1) + diphosphate. RNA-dependent RNA polymerase, which is responsible for the replication and transcription of the viral RNA genome using antigenomic RNA as an intermediate. During transcription, synthesizes subgenomic RNAs and assures their capping by a cap-snatching mechanism, which involves the endonuclease activity cleaving the host capped pre-mRNAs. These short capped RNAs are then used as primers for viral transcription. The 3'-end of subgenomic mRNAs molecules are heterogeneous and not polyadenylated. The replicase function is to direct synthesis of antigenomic and genomic RNA which are encapsidated and non capped. As a consequence of the use of the same enzyme for both transcription and replication, these mechanisms need to be well coordinated. These processes may be regulated by proteins N and Z in a dose-dependent manner. Z protein inhibits the viral polymerase L und thus the viral transcription and RNA synthesis. The chain is RNA-directed RNA polymerase L from Bear Canyon mammarenavirus (isolate Mouse/United States/AV A0070039/2000) (BCNV).